Reading from the N-terminus, the 665-residue chain is E3 ubiquitin-protein ligase cblA (665 aa).

Positions 30 to 50 (NNNNNINNNNNNNNINSNNNG) are disordered. The tract at residues 109–231 (TSLVNYIHYE…NNENNNNNNN (123 aa)) is 4H. One can recognise a Cbl-PTB domain in the interval 109 to 400 (TSLVNYIHYE…PDIFKSILSF (292 aa)). The segment at 232-306 (NYNPYELLSN…FKLSVFIKWF (75 aa)) is EF-hand-like. D287, T289, D291, and Y293 together coordinate Ca(2+). The interval 307–400 (GALPVSLGIF…PDIFKSILSF (94 aa)) is SH2-like. 2 disordered regions span residues 437-456 (ENNN…INTF) and 467-609 (DSSN…NNNN). Residues 467–478 (DSSNSSDTNKSP) show a composition bias toward low complexity. The stretch at 479–544 (TKSRKSSFKN…NNNNNNNNNN (66 aa)) forms a coiled coil. The span at 486 to 512 (FKNDKDKKEKEKEKGKDKEKEKERVSD) shows a compositional bias: basic and acidic residues. 2 stretches are compositionally biased toward low complexity: residues 530–561 (NNNN…NNNN) and 571–609 (TSNG…NNNN). Residues 618–653 (CTVCMDNEINTVFLECGHLSCCSLCSVKLKKCPICR) form an RING-type zinc finger.

Post-translationally, ubiquitinated.

The protein resides in the cytoplasm. Its subcellular location is the nucleus. It catalyses the reaction S-ubiquitinyl-[E2 ubiquitin-conjugating enzyme]-L-cysteine + [acceptor protein]-L-lysine = [E2 ubiquitin-conjugating enzyme]-L-cysteine + N(6)-ubiquitinyl-[acceptor protein]-L-lysine.. It functions in the pathway protein modification; protein ubiquitination. Functionally, acts as an E3 ubiquitin-protein ligase, which accepts ubiquitin from specific E2 ubiquitin-conjugating enzymes, and then transfers it to substrates promoting their degradation by the proteasome. Up-regulates STATc tyrosine phosphorylation via an inhibitory effect on ptpC accumulation. Recognizes activated receptor tyrosine kinases, RTKs and terminates signaling. The sequence is that of E3 ubiquitin-protein ligase cblA (cblA-1) from Dictyostelium discoideum (Social amoeba).